The chain runs to 1403 residues: DNA-directed RNA polymerase subunit beta' (1403 aa).

Residues Cys-68, Cys-70, Cys-83, and Cys-86 each contribute to the Zn(2+) site. Residues Asp-459, Asp-461, and Asp-463 each coordinate Mg(2+). Zn(2+)-binding residues include Cys-814, Cys-887, Cys-894, and Cys-897.

The protein belongs to the RNA polymerase beta' chain family. In terms of assembly, the RNAP catalytic core consists of 2 alpha, 1 beta, 1 beta' and 1 omega subunit. When a sigma factor is associated with the core the holoenzyme is formed, which can initiate transcription. Requires Mg(2+) as cofactor. Zn(2+) is required as a cofactor.

The catalysed reaction is RNA(n) + a ribonucleoside 5'-triphosphate = RNA(n+1) + diphosphate. Its function is as follows. DNA-dependent RNA polymerase catalyzes the transcription of DNA into RNA using the four ribonucleoside triphosphates as substrates. The sequence is that of DNA-directed RNA polymerase subunit beta' from Solibacter usitatus (strain Ellin6076).